Consider the following 88-residue polypeptide: Large ribosomal subunit protein uL29 (88 aa).

This sequence belongs to the universal ribosomal protein uL29 family.

This is Large ribosomal subunit protein uL29 (rpl29) from Sulfurisphaera tokodaii (strain DSM 16993 / JCM 10545 / NBRC 100140 / 7) (Sulfolobus tokodaii).